The sequence spans 1050 residues: MDKRKLGRRPSSSEIITEGKRKKSSSDLSEIRKMLNAKPEDVHVQSPLSKFRSSERWTLPLQWERSLRNKVISLDHKNKKHIRGCPVTSKSSPERQLKVMLTNVLWTDLGRKFRKTLPRNDANLCDANKVQSDSLPSTSVDSLETCQKLEPLRQSLNLSERIPRVILTNVLGTELGRKYIRTPPVTEGSLSDTDNLQSEQLSSSSDGSLESYQNLNPHKSCYLSERGSQRSKTVDDNSAKQTAHNKEKRRKDDGISLLISDTQPEDLNSGSRGCDHLEQESRNKDVKYSDSKVELTLISRKTKRRLRNNLPDSQYCTSLDKSTEQTKKQEDDSTISTEFEKPSENYHQDPKLPEEITTKPTKSDFTKLSSLNSQELTLSNATKSASAGSTTETVENSNSIDIVGISSLVEKDENELNTIEKPILRGHNEGNQSLISAEPIVVSSDEEGPVEHKSSEILKLQSKQDRETTNENESTSESALLELPLITCESVQMSSELCPYNPVMENISSIMPSNEMDLQLDFIFTSVYIGKIKGASKGCVTITKKYIKIPFQVSLNEISLLVDTTHLKRFGLWKSKDDNHSKRSHAILFFWVSSDYLQEIQTQLEHSVLSQQSKSSEFIFLELHNPVSQREELKLKDIMTEISIISGELELSYPLSWVQAFPLFQNLSSKESSFIHYYCVSTCSFPAGVAVAEEMKLKSVSQPSNTDAAKPTYTFLQKQSSGCYSLSITSNPDEEWREVRHTGLVQKLIVYPPPPTKGGLGVTNEDLECLEEGEFLNDVIIDFYLKYLILEKASDELVERSHIFSSFFYKCLTRKENNLTEDNPNLSMAQRRHKRVRTWTRHINIFNKDYIFVPVNESSHWYLAVICFPWLEEAVYEDFPQTVSQQSQAQQSQNDNKTIDNDLRTTSTLSLSAEDSQSTESNMSVPKKMCKRPCILILDSLKAASVQNTVQNLREYLEVEWEVKLKTHRQFSKTNMVDLCPKVPKQDNSSDCGVYLLQYVESFFKDPIVNFELPIHLEKWFPRHVIKTKREDIRELILKLHLQQQKGSSS.

Disordered regions lie at residues 1–28, 183–288, and 304–365; these read MDKR…SSDL, PPVT…DVKY, and RRLR…KSDF. A phosphoserine mark is found at Ser11, Ser12, Ser13, and Ser25. Residues 196-211 are compositionally biased toward low complexity; sequence LQSEQLSSSSDGSLES. Positions 259–271 are enriched in polar residues; that stretch reads ISDTQPEDLNSGS. A compositionally biased stretch (basic and acidic residues) spans 273–288; that stretch reads GCDHLEQESRNKDVKY. The segment covering 310 to 320 has biased composition (polar residues); that stretch reads LPDSQYCTSLD. 2 stretches are compositionally biased toward basic and acidic residues: residues 321–331 and 338–365; these read KSTEQTKKQED and EFEK…KSDF. Residues Ser373, Ser433, Ser443, and Ser444 each carry the phosphoserine modification. The disordered stretch occupies residues 443–476; it reads SSDEEGPVEHKSSEILKLQSKQDRETTNENESTS. Positions 449 to 469 are enriched in basic and acidic residues; the sequence is PVEHKSSEILKLQSKQDRETT. Residues 760–1050 form a protease region; the sequence is LGVTNEDLEC…HLQQQKGSSS (291 aa). Active-site residues include His860 and Asp939. Catalysis depends on Cys992, which acts as the Nucleophile.

This sequence belongs to the peptidase C48 family.

Its subcellular location is the cytoplasm. Protease that acts as a positive regulator of the cGAS-STING pathway by catalyzing desumoylation of CGAS. Desumoylation of CGAS promotes DNA-binding activity of CGAS, subsequent oligomerization and activation. Deconjugates SUMO2 and SUMO3 from targeted proteins, but not SUMO1. Catalyzes the deconjugation of poly-SUMO2 and poly-SUMO3 chains. Has very low efficiency in processing full-length SUMO proteins to their mature forms. This Homo sapiens (Human) protein is Sentrin-specific protease 7.